The primary structure comprises 153 residues: General odorant-binding protein lush (153 aa).

An N-terminal signal peptide occupies residues 1–29 (MKHWKRRSSAVFAIVLQVLVLLLPDPAVA). 3 disulfide bridges follow: Cys-46–Cys-79, Cys-75–Cys-132, and Cys-121–Cys-141. Residues Ser-81 and Thr-86 each contribute to the 1-propanol site. Butan-1-ol is bound by residues Ser-81 and Thr-86. Residues Ser-81 and Thr-86 each coordinate ethanol.

It belongs to the PBP/GOBP family. As to expression, specifically expressed in chemosensory system in both males and females. Expressed in a subset of trichoid chemosensory sensilla located on the ventral-lateral surface of the third antennal segment. Secreted from non-neuronal support cells into the sensillum lymph that bathes the olfactory neurons within these sensilla.

It is found in the secreted. In terms of biological role, odorant-binding protein required for olfactory behavior and for activity of pheromone-sensitive neurons. Binds to alcohols and mediates avoidance behavior to high concentrations of alcohols, the alcohol-binding possibly resulting in activation of receptors on T2B neurons, the activation of these receptors inhibiting these neurons. Acts in concert with Snmp and lush to capture cVA molecules on the surface of Or67d expressing olfactory dendrites and facilitate their transfer to the odorant-receptor Orco complex. Required for cVA response, probably by binding to VA. May act by serving as an adapter that bridges the presence of gaseous pheromone molecules, cVA, to activation of specific neuronal receptors expressed on T1 olfactory neurons, possibly via a specific conformational change induced by cVA that in turn activates T1 receptors. T1 neurons are excited by the pheromone VA, while T2 neurons are inhibited by alcohols. Also binds to phthalates. The sequence is that of General odorant-binding protein lush (lush) from Drosophila melanogaster (Fruit fly).